Reading from the N-terminus, the 282-residue chain is Bis(5'-nucleosyl)-tetraphosphatase, symmetrical (282 aa).

It belongs to the Ap4A hydrolase family.

The catalysed reaction is P(1),P(4)-bis(5'-adenosyl) tetraphosphate + H2O = 2 ADP + 2 H(+). Functionally, hydrolyzes diadenosine 5',5'''-P1,P4-tetraphosphate to yield ADP. In Escherichia coli O45:K1 (strain S88 / ExPEC), this protein is Bis(5'-nucleosyl)-tetraphosphatase, symmetrical.